The primary structure comprises 398 residues: Probable beta-1,3-galactosyltransferase 5 (398 aa).

A helical; Signal-anchor for type II membrane protein membrane pass occupies residues 11–31 (LTMTWVPLLCISCFFLGAIFT). N-linked (GlcNAc...) asparagine glycans are attached at residues Asn-110, Asn-115, and Asn-206.

Belongs to the glycosyltransferase 31 family. Mn(2+) serves as cofactor.

It is found in the golgi apparatus membrane. It participates in protein modification; protein glycosylation. In terms of biological role, beta-1,3-galactosyltransferase that transfers galactose from UDP-galactose to substrates with a terminal glycosyl residue. This chain is Probable beta-1,3-galactosyltransferase 5 (B3GALT5), found in Arabidopsis thaliana (Mouse-ear cress).